Reading from the N-terminus, the 196-residue chain is Segregation and condensation protein B (196 aa).

This sequence belongs to the ScpB family. Homodimer. Homodimerization may be required to stabilize the binding of ScpA to the Smc head domains. Component of a cohesin-like complex composed of ScpA, ScpB and the Smc homodimer, in which ScpA and ScpB bind to the head domain of Smc. The presence of the three proteins is required for the association of the complex with DNA.

It localises to the cytoplasm. Functionally, participates in chromosomal partition during cell division. May act via the formation of a condensin-like complex containing Smc and ScpA that pull DNA away from mid-cell into both cell halves. The polypeptide is Segregation and condensation protein B (Lactobacillus johnsonii (strain CNCM I-12250 / La1 / NCC 533)).